Consider the following 204-residue polypeptide: MQMIHKEGWIEVICGSMFSGKSEELIRRVRRATYGRLKVQVFKPAIDNRYSEQEVVSHNGNKVCAIPVERAMSILEQWSEDTDIVAIDEVQFFDEDVIGVVDYLADHGVRVICAGLDQDFRGEPFEPTRTLMAMAEYVTKLQAICPVCGSPASRTQRLIDGKPASYHDPIILVGAAEAYEPRCRHCHQVTNKPSKLPETASSGE.

Residues 15-22 and 88-91 each bind ATP; these read GSMFSGKS and DEVQ. The active-site Proton acceptor is Glu-89. Residues Cys-145, Cys-148, Cys-183, and Cys-186 each coordinate Zn(2+).

This sequence belongs to the thymidine kinase family. In terms of assembly, homotetramer.

Its subcellular location is the cytoplasm. It carries out the reaction thymidine + ATP = dTMP + ADP + H(+). This Halalkalibacterium halodurans (strain ATCC BAA-125 / DSM 18197 / FERM 7344 / JCM 9153 / C-125) (Bacillus halodurans) protein is Thymidine kinase.